We begin with the raw amino-acid sequence, 473 residues long: Lactococcin A secretion protein LcnD-like (473 aa).

Residues 1 to 21 (MFDKKLLESSELYDKRYRNFS) are Cytoplasmic-facing. A helical transmembrane segment spans residues 22–44 (TLIILPLFILLVGGVIFTFFAHK). The Extracellular portion of the chain corresponds to 45 to 473 (ELTVISTGSI…FLDKIMGRTS (429 aa)).

It belongs to the membrane fusion protein (MFP) (TC 8.A.1) family.

Its subcellular location is the cell membrane. Functionally, involved in the secretion of a lactococcin. In Lactococcus lactis subsp. lactis (strain IL1403) (Streptococcus lactis), this protein is Lactococcin A secretion protein LcnD-like (lcnD).